The sequence spans 642 residues: Threonine--tRNA ligase (642 aa).

A TGS domain is found at 1–61 (MPIITLPDGS…EADASLAIIT (61 aa)). The segment at 243–534 (DHRKIGKQLD…LTEEYAGLFP (292 aa)) is catalytic. Zn(2+) contacts are provided by Cys334, His385, and His511.

Belongs to the class-II aminoacyl-tRNA synthetase family. As to quaternary structure, homodimer. Zn(2+) is required as a cofactor.

Its subcellular location is the cytoplasm. The catalysed reaction is tRNA(Thr) + L-threonine + ATP = L-threonyl-tRNA(Thr) + AMP + diphosphate + H(+). In terms of biological role, catalyzes the attachment of threonine to tRNA(Thr) in a two-step reaction: L-threonine is first activated by ATP to form Thr-AMP and then transferred to the acceptor end of tRNA(Thr). Also edits incorrectly charged L-seryl-tRNA(Thr). This chain is Threonine--tRNA ligase, found in Aeromonas hydrophila subsp. hydrophila (strain ATCC 7966 / DSM 30187 / BCRC 13018 / CCUG 14551 / JCM 1027 / KCTC 2358 / NCIMB 9240 / NCTC 8049).